The primary structure comprises 103 residues: NADH-quinone oxidoreductase subunit K 2 (103 aa).

3 helical membrane passes run 7 to 27 (LAWY…GFMI), 31 to 51 (IITI…TFVA), and 63 to 83 (IFVF…LGII).

This sequence belongs to the complex I subunit 4L family. As to quaternary structure, NDH-1 is composed of 14 different subunits. Subunits NuoA, H, J, K, L, M, N constitute the membrane sector of the complex.

It is found in the cell inner membrane. The catalysed reaction is a quinone + NADH + 5 H(+)(in) = a quinol + NAD(+) + 4 H(+)(out). NDH-1 shuttles electrons from NADH, via FMN and iron-sulfur (Fe-S) centers, to quinones in the respiratory chain. The immediate electron acceptor for the enzyme in this species is believed to be ubiquinone. Couples the redox reaction to proton translocation (for every two electrons transferred, four hydrogen ions are translocated across the cytoplasmic membrane), and thus conserves the redox energy in a proton gradient. This is NADH-quinone oxidoreductase subunit K 2 from Koribacter versatilis (strain Ellin345).